The following is a 127-amino-acid chain: Fluoride-specific ion channel FluC (127 aa).

4 helical membrane-spanning segments follow: residues 2-22, 35-55, 68-88, and 104-124; these read LSSL…RWAI, LGTL…IAIF, LITT…LEVV, and LLNL…VVWI. Residues Gly-75 and Thr-78 each coordinate Na(+).

Belongs to the fluoride channel Fluc/FEX (TC 1.A.43) family.

It is found in the cell inner membrane. The catalysed reaction is fluoride(in) = fluoride(out). Na(+) is not transported, but it plays an essential structural role and its presence is essential for fluoride channel function. Functionally, fluoride-specific ion channel. Important for reducing fluoride concentration in the cell, thus reducing its toxicity. This Serratia proteamaculans (strain 568) protein is Fluoride-specific ion channel FluC.